We begin with the raw amino-acid sequence, 400 residues long: 2'-5'-oligoadenylate synthase 1 (400 aa).

An interaction with dsRNA region spans residues 13–60 (DKFIEDYLLPDTCFRMQINHAIDIICGFLKERCFRGSSYPVCVSKVVK). Ser-63 is an ATP binding site. Residues Asp-75, Asp-77, and Asp-148 each contribute to the Mg(2+) site. Positions 200–210 (QRPTKLKSLIR) are interaction with dsRNA. 3 residues coordinate ATP: Arg-210, Lys-213, and Gln-229. Residue Cys-397 is the site of S-geranylgeranyl cysteine attachment.

It belongs to the 2-5A synthase family. As to quaternary structure, monomer. Homotetramer. Requires Mg(2+) as cofactor. In terms of processing, prenylated at C-terminal. C-terminal prenylation is necessary to initiate a block to SARS-CoV-2 and is associated with protection from severe COVID-1. The prenylated form is targeted to perinuclear structures rich in viral dsRNA, whereas the non-prenylated form is diffusely localized and unable to initiate a detectable block to SARS-CoV-2 replication. C-terminal prenylation is also necessary to initiate a block to cardiovirus EMCV. Not prenylated at C-terminal. The non-prenylated form is diffusely localized and unable to initiate a detectable block to SARS-CoV-2 replication. In terms of tissue distribution, expressed in lungs.

It localises to the cytoplasm. Its subcellular location is the mitochondrion. It is found in the nucleus. The protein resides in the microsome. The protein localises to the endoplasmic reticulum. It localises to the secreted. The catalysed reaction is 3 ATP = 5'-triphosphoadenylyl-(2'-&gt;5')-adenylyl-(2'-&gt;5')-adenosine + 2 diphosphate. Its activity is regulated as follows. Produced as a latent enzyme which is activated by dsRNA generated during the course of viral infection. The dsRNA activator must be at least 15 nucleotides long, and no modification of the 2'-hydroxyl group is tolerated. ssRNA or dsDNA do not act as activators. In terms of biological role, interferon-induced, dsRNA-activated antiviral enzyme which plays a critical role in cellular innate antiviral response. In addition, it may also play a role in other cellular processes such as apoptosis, cell growth, differentiation and gene regulation. Synthesizes higher oligomers of 2'-5'-oligoadenylates (2-5A) from ATP which then bind to the inactive monomeric form of ribonuclease L (RNase L) leading to its dimerization and subsequent activation. Activation of RNase L leads to degradation of cellular as well as viral RNA, resulting in the inhibition of protein synthesis, thus terminating viral replication. Can mediate the antiviral effect via the classical RNase L-dependent pathway or an alternative antiviral pathway independent of RNase L. The secreted form displays antiviral effect against vesicular stomatitis virus (VSV), herpes simplex virus type 2 (HSV-2), and encephalomyocarditis virus (EMCV) and stimulates the alternative antiviral pathway independent of RNase L. When prenylated at C-terminal, acts as a double-stranded RNA (dsRNA) sensor specifically targeted to membranous replicative organelles in SARS coronavirus-2/SARS-CoV-2 infected cells where it binds to dsRNA structures in the SARS-CoV-2 5'-UTR and initiates a potent block to SARS-CoV-2 replication. Recognizes short stretches of dsRNA and activates RNase L. The binding is remarkably specific, with two conserved stem loops in the SARS-CoV-2 5'- untranslated region (UTR) constituting the principal viral target. The same mechanism is necessary to initiate a block to cardiovirus EMCV. Functionally, not prenylated at C-terminal, is diffusely localized and unable to initiate a detectable block to SARS-CoV-2 replication. The protein is 2'-5'-oligoadenylate synthase 1 (OAS1) of Homo sapiens (Human).